Here is a 131-residue protein sequence, read N- to C-terminus: Monothiol glutaredoxin-S6 (131 aa).

Residues 31 to 131 (SAFVQNAIYS…KLLGNSQSQR (101 aa)) enclose the Glutaredoxin domain. Cysteine 51 contributes to the [2Fe-2S] cluster binding site.

The protein belongs to the glutaredoxin family. CPYC subfamily.

The protein resides in the cytoplasm. Functionally, may only reduce GSH-thiol disulfides, but not protein disulfides. The sequence is that of Monothiol glutaredoxin-S6 (GRXS6) from Oryza sativa subsp. japonica (Rice).